The primary structure comprises 275 residues: Formamidopyrimidine-DNA glycosylase (275 aa).

Proline 2 acts as the Schiff-base intermediate with DNA in catalysis. Glutamate 3 acts as the Proton donor in catalysis. The active-site Proton donor; for beta-elimination activity is the lysine 58. Histidine 91 and arginine 110 together coordinate DNA. The FPG-type zinc finger occupies 238-272; it reads QVYGQTGKPCPRCGQAIVKLKVGGRGTHICPKCQK. Arginine 262 functions as the Proton donor; for delta-elimination activity in the catalytic mechanism.

Belongs to the FPG family. In terms of assembly, monomer. The cofactor is Zn(2+).

It carries out the reaction Hydrolysis of DNA containing ring-opened 7-methylguanine residues, releasing 2,6-diamino-4-hydroxy-5-(N-methyl)formamidopyrimidine.. The enzyme catalyses 2'-deoxyribonucleotide-(2'-deoxyribose 5'-phosphate)-2'-deoxyribonucleotide-DNA = a 3'-end 2'-deoxyribonucleotide-(2,3-dehydro-2,3-deoxyribose 5'-phosphate)-DNA + a 5'-end 5'-phospho-2'-deoxyribonucleoside-DNA + H(+). Involved in base excision repair of DNA damaged by oxidation or by mutagenic agents. Acts as a DNA glycosylase that recognizes and removes damaged bases. Has a preference for oxidized purines, such as 7,8-dihydro-8-oxoguanine (8-oxoG). Has AP (apurinic/apyrimidinic) lyase activity and introduces nicks in the DNA strand. Cleaves the DNA backbone by beta-delta elimination to generate a single-strand break at the site of the removed base with both 3'- and 5'-phosphates. The sequence is that of Formamidopyrimidine-DNA glycosylase from Streptococcus pyogenes serotype M28 (strain MGAS6180).